The chain runs to 584 residues: MITGTIARISGPVITARNMTGSRMYDVVWVGRAALPGEIIRLEGDEAVIQVYEDTTGLMIHEPVENTGVPLSVELGPGLLASIYDGVQRPLPALYAKSGNYISRGIMVPGLDREKRWAFNPVKKAGEMVQTGDVLGTVQEFHLVHSIMVPPGVSGEIKTIASGEFTVTDVVCTLADGTEITMLQRWPVRKGRPFVKRLDPEVPLLTGQRVFDTMFPLVKGGTAMIPGGFGTGKTVSEQTLAKWADTQVVVYIGCGERGNEMTDVLTEFPELTDPRTGYPLIERTIMIANTSNMPVAAREASIYTGITIAEYYRDMGMDVALLADSTSRWGEALREVSGRLEEMPGEEGYPAYLATRLAAFYERAGRVICAGSEEKTGSVTIIGAVSPPGGDFSEPITQNTLRIAGTFWALDANLAYRRHYPSVNWIRSYSLYLEDVEDWFSEKVARDWYQFRGRAMYILQKEVELQEIVQLVGPDALPDKEKVVLEIAKIIREDFLQQSAYSDDDSFCPLEKQYWMLKIIIWYYDAIRAAMRRNVPLRQLLSIPARSEIARMKEQRDLDRLKRLSDIVWEQTENLEVQTCSTAA.

227–234 is a binding site for ATP; that stretch reads GGFGTGKT.

This sequence belongs to the ATPase alpha/beta chains family. As to quaternary structure, has multiple subunits with at least A(3), B(3), C, D, E, F, H, I and proteolipid K(x).

Its subcellular location is the cell membrane. It carries out the reaction ATP + H2O + 4 H(+)(in) = ADP + phosphate + 5 H(+)(out). Functionally, component of the A-type ATP synthase that produces ATP from ADP in the presence of a proton gradient across the membrane. The A chain is the catalytic subunit. The chain is A-type ATP synthase subunit A 2 from Methanospirillum hungatei JF-1 (strain ATCC 27890 / DSM 864 / NBRC 100397 / JF-1).